The following is a 148-amino-acid chain: uncharacterized protein (148 aa).

The 142-residue stretch at 7–148 folds into the N-acetyltransferase domain; it reads LEINYKTDEL…HDVLLWKPIR (142 aa).

This is an uncharacterized protein from Staphylococcus aureus (strain Mu50 / ATCC 700699).